The primary structure comprises 111 residues: MLISVLKSKISYATVTGKDLFYVGSITIDSEIMKQANIIENEKVQVVNLNNGERLETYVIKGEPNSKTIALNGPAARRCEIGDQLFIISYTQVDPTRENIKPKLVDLKTGD.

Catalysis depends on Ser25, which acts as the Schiff-base intermediate with substrate; via pyruvic acid. Position 25 is a pyruvic acid (Ser) (Ser25). Thr57 serves as a coordination point for substrate. The active-site Proton donor is Tyr58. Position 73-75 (73-75) interacts with substrate; sequence GPA.

This sequence belongs to the PanD family. As to quaternary structure, heterooctamer of four alpha and four beta subunits. Requires pyruvate as cofactor. Is synthesized initially as an inactive proenzyme, which is activated by self-cleavage at a specific serine bond to produce a beta-subunit with a hydroxyl group at its C-terminus and an alpha-subunit with a pyruvoyl group at its N-terminus.

It is found in the cytoplasm. The enzyme catalyses L-aspartate + H(+) = beta-alanine + CO2. The protein operates within cofactor biosynthesis; (R)-pantothenate biosynthesis; beta-alanine from L-aspartate: step 1/1. Catalyzes the pyruvoyl-dependent decarboxylation of aspartate to produce beta-alanine. The polypeptide is Aspartate 1-decarboxylase (Francisella tularensis subsp. tularensis (strain FSC 198)).